The sequence spans 189 residues: T-cell surface glycoprotein CD3 epsilon chain (189 aa).

The first 21 residues, 1–21 (MRWNTFWGILCLSLLAVGTCQ), serve as a signal peptide directing secretion. An Ig-like domain is found at 23 to 99 (DAENIEYKVS…KNTYLYLKAR (77 aa)). Over 23-108 (DAENIEYKVS…RVCEYCVEVD (86 aa)) the chain is Extracellular. A disulfide bond links Cys-42 and Cys-83. Residues 109 to 134 (LTAVAIIIIVDICITLGLLMVIYYWS) form a helical membrane-spanning segment. Over 135–189 (KNRKAKAKPVTRGTGAGSRPRGQNKERPPPVPNPDYEPIRKGQRDLYSGLNQRAV) the chain is Cytoplasmic. The interval 143–189 (PVTRGTGAGSRPRGQNKERPPPVPNPDYEPIRKGQRDLYSGLNQRAV) is disordered. The interval 157-174 (QNKERPPPVPNPDYEPIR) is NUMB-binding region. The 28-residue stretch at 160 to 187 (ERPPPVPNPDYEPIRKGQRDLYSGLNQR) folds into the ITAM domain. Residues 161–168 (RPPPVPNP) are proline-rich sequence. Tyr-170 and Tyr-181 each carry phosphotyrosine.

As to quaternary structure, the TCR-CD3 complex is composed of a CD3D/CD3E and a CD3G/CD3E heterodimers that preferentially associate with TCRalpha and TCRbeta, respectively, to form TCRalpha/CD3E/CD3G and TCRbeta/CD3G/CD3E trimers. In turn, the hexamer interacts with CD3Z homodimer to form the TCR-CD3 complex. Alternatively, TCRalpha and TCRbeta can be replaced by TCRgamma and TCRdelta. Interacts with CD6. Interacts (via Proline-rich sequence) with NCK1; the interaction is ligand dependent but independent of tyrosine kinase activation. Phosphorylated on Tyr residues after T-cell receptor triggering by LCK in association with CD4/CD8.

It localises to the cell membrane. Functionally, part of the TCR-CD3 complex present on T-lymphocyte cell surface that plays an essential role in adaptive immune response. When antigen presenting cells (APCs) activate T-cell receptor (TCR), TCR-mediated signals are transmitted across the cell membrane by the CD3 chains CD3D, CD3E, CD3G and CD3Z. All CD3 chains contain immunoreceptor tyrosine-based activation motifs (ITAMs) in their cytoplasmic domain. Upon TCR engagement, these motifs become phosphorylated by Src family protein tyrosine kinases LCK and FYN, resulting in the activation of downstream signaling pathways. In addition of this role of signal transduction in T-cell activation, CD3E plays an essential role in correct T-cell development. Also participates in internalization and cell surface down-regulation of TCR-CD3 complexes via endocytosis sequences present in CD3E cytosolic region. In addition to its role as a TCR coreceptor, it serves as a receptor for ITPRIPL1. Ligand recognition inhibits T-cell activation by promoting interaction with NCK1, which prevents CD3E-ZAP70 interaction and blocks the ERK-NFkB signaling cascade and calcium influx. The sequence is that of T-cell surface glycoprotein CD3 epsilon chain (Cd3e) from Mus musculus (Mouse).